The sequence spans 367 residues: HTH-type transcriptional regulator GbdR (367 aa).

Positions 227-325 (QEIVALMEAN…GIPPRDERQG (99 aa)) constitute an HTH araC/xylS-type domain. 2 DNA-binding regions (H-T-H motif) span residues 244 to 265 (DELAVYVNVSRRQLERLFQKYL) and 292 to 315 (IIEVASVCGFVSTPHFSKCYREYF).

In terms of biological role, specific regulator of choline metabolism, which activates transcription of at least 25 genes from 11 promoters in response to choline metabolites. Required for the induction of plcH, encoding the phospholipase C, and pchP, encoding the phosphorylcholine phosphatase, in response to glycine betaine (GB) and dimethylglycine (DMG). Also controls the expression of gbcAB and dgcAB, which are required for GB and DMG degradation, respectively, in response to both GB and DMG. The GbdR regulon also includes genes encoding sarcosine, glycine and serine catabolic enzymes, the BetX and CbcXWV quaternary amine transport proteins and the acetylcholine esterase gene, choE. Acts by binding directly to the promoter region of the genes. May play an important role during P.aeruginosa interactions with eukaryotes. The sequence is that of HTH-type transcriptional regulator GbdR from Pseudomonas aeruginosa (strain UCBPP-PA14).